Here is a 399-residue protein sequence, read N- to C-terminus: Methylthioribose kinase (399 aa).

Residues Asn-40, Lys-57, and 111–113 (EDL) each bind ATP. A substrate-binding site is contributed by Asp-229. Position 246-248 (246-248 (DAE)) interacts with ATP. Substrate is bound at residue Arg-344.

It belongs to the methylthioribose kinase family. In terms of assembly, homodimer.

The enzyme catalyses 5-(methylsulfanyl)-D-ribose + ATP = 5-(methylsulfanyl)-alpha-D-ribose 1-phosphate + ADP + H(+). Its pathway is amino-acid biosynthesis; L-methionine biosynthesis via salvage pathway; S-methyl-5-thio-alpha-D-ribose 1-phosphate from S-methyl-5'-thioadenosine (hydrolase route): step 2/2. Catalyzes the phosphorylation of methylthioribose into methylthioribose-1-phosphate. The polypeptide is Methylthioribose kinase (Klebsiella pneumoniae (strain 342)).